The primary structure comprises 578 residues: Polymerase acidic protein (578 aa).

The RNA polymerase is composed of three subunits: PB1, PB2 and PA. Phosphorylated on serines and threonines by host kinases.

In terms of biological role, implicated in endonuclease cleavage of capped RNA primers. Displays an elongation factor activity in viral RNA synthesis. Dispensable for viral transcription, but not replication. This is Polymerase acidic protein from Infectious salmon anemia virus (isolate Atlantic salmon/Norway/810/9/99) (ISAV).